The following is a 304-amino-acid chain: Ribosomal protein L11 methyltransferase (304 aa).

S-adenosyl-L-methionine-binding residues include threonine 155, glycine 176, aspartate 198, and asparagine 239.

Belongs to the methyltransferase superfamily. PrmA family.

The protein localises to the cytoplasm. It catalyses the reaction L-lysyl-[protein] + 3 S-adenosyl-L-methionine = N(6),N(6),N(6)-trimethyl-L-lysyl-[protein] + 3 S-adenosyl-L-homocysteine + 3 H(+). Its function is as follows. Methylates ribosomal protein L11. The protein is Ribosomal protein L11 methyltransferase of Caldicellulosiruptor bescii (strain ATCC BAA-1888 / DSM 6725 / KCTC 15123 / Z-1320) (Anaerocellum thermophilum).